Reading from the N-terminus, the 216-residue chain is UPF0548 protein (216 aa).

It belongs to the UPF0548 family.

The sequence is that of UPF0548 protein from Dictyostelium discoideum (Social amoeba).